A 379-amino-acid chain; its full sequence is MHACEGSAAGRRAFDSICPNRMLDLSRRSLGKPGKPERKFVPPWKSFPGCGGGSPVSVYEDPLDAEPAPLPALTTIDLQDLADCTSLLGTEAPPSGDSPASQNPSLQTEADFNLQNFRDAVDDLIADSSSLTSPPLTDGDFPFSPCDVPSFGSCLSPSLDPPALGSPHLPPPPTEQYWKEVADQNQRALGTALIENNQLHVTLTQKQEEIASLRERNVQLKELACRTRHLASVLDKLMITQSPAEPFQLKATTKRSLEELFSATGQAGQGCAEVDAILRDISQRCEEALQNRDPKRPRLQQEPDSKDCSTRNLHGVFRGLRTDCGASSVNLSHSELEEGGSFSTPIRSHSTIRTLAFPQGKAFTIRTVTGGYKFRWVPS.

Disordered stretches follow at residues 26–46 (SRRS…PWKS) and 87–106 (LLGT…NPSL). Residues 175–223 (EQYWKEVADQNQRALGTALIENNQLHVTLTQKQEEIASLRERNVQLKEL) are a coiled coil. Residues 289 to 309 (LQNRDPKRPRLQQEPDSKDCS) are compositionally biased toward basic and acidic residues. Residues 289 to 311 (LQNRDPKRPRLQQEPDSKDCSTR) are disordered.

The protein belongs to the geminin family. As to quaternary structure, heterodimer (via coiled-coil domain) with GMNN (via coiled-coil domain); targets GMNN to the nucleus. Can form homodimers (in vitro, via coiled-coil domain), but these are much less stable than the heterodimer formed with GMNN.

The protein resides in the nucleus. In terms of biological role, transcription regulator specifically required for multiciliate cell differentiation. Acts in a multiprotein complex containing E2F4 and E2F5 that binds and activates genes required for centriole biogenesis. Required for the deuterosome-mediated acentriolar pathway. Plays a role in mitotic cell cycle progression by promoting cell cycle exit. Modulates GMNN activity by reducing its affinity for CDT1. In Rattus norvegicus (Rat), this protein is Multicilin (Mcidas).